A 762-amino-acid polypeptide reads, in one-letter code: Phospholipase D alpha 4 (762 aa).

The C2 domain occupies 1–116 (MELEEQKKYF…VINGFFPLIA (116 aa)). Asp-172 serves as a coordination point for Ca(2+). The region spanning 301 to 339 (TAFAHHQKTITLDTRVTNSSTKEREIMSFLGGFDLCDGR) is the PLD phosphodiesterase 1 domain. Active-site residues include His-306, Lys-308, and Asp-313. His-306 lines the a 1,2-diacyl-sn-glycero-3-phosphate pocket. Residues His-345 and His-377 each coordinate Ca(2+). Positions 477 and 615 each coordinate a 1,2-diacyl-sn-glycero-3-phosphate. A PLD phosphodiesterase 2 domain is found at 610 to 637 (FMVYVHSKLMIVDDTYILIGSANINQRS). Active-site residues include His-615, Lys-617, and Asp-622. Residue Glu-671 coordinates Ca(2+).

This sequence belongs to the phospholipase D family. C2-PLD subfamily. Requires Ca(2+) as cofactor. In terms of tissue distribution, expressed in roots, leaves, stems, siliques,flowers and inflorescences.

It is found in the cell membrane. The enzyme catalyses a 1,2-diacyl-sn-glycero-3-phosphocholine + H2O = a 1,2-diacyl-sn-glycero-3-phosphate + choline + H(+). Functionally, hydrolyzes glycerol-phospholipids at the terminal phosphodiesteric bond to generate phosphatidic acids (PA). Promotes growth and plays a role in nitrogen signaling. In Arabidopsis thaliana (Mouse-ear cress), this protein is Phospholipase D alpha 4.